The primary structure comprises 306 residues: Bifunctional protein FolD 2 (306 aa).

NADP(+)-binding positions include 169 to 171 (GHS) and isoleucine 235.

The protein belongs to the tetrahydrofolate dehydrogenase/cyclohydrolase family. As to quaternary structure, homodimer.

It carries out the reaction (6R)-5,10-methylene-5,6,7,8-tetrahydrofolate + NADP(+) = (6R)-5,10-methenyltetrahydrofolate + NADPH. It catalyses the reaction (6R)-5,10-methenyltetrahydrofolate + H2O = (6R)-10-formyltetrahydrofolate + H(+). It participates in one-carbon metabolism; tetrahydrofolate interconversion. Its function is as follows. Catalyzes the oxidation of 5,10-methylenetetrahydrofolate to 5,10-methenyltetrahydrofolate and then the hydrolysis of 5,10-methenyltetrahydrofolate to 10-formyltetrahydrofolate. In Mesorhizobium japonicum (strain LMG 29417 / CECT 9101 / MAFF 303099) (Mesorhizobium loti (strain MAFF 303099)), this protein is Bifunctional protein FolD 2.